The following is a 263-amino-acid chain: Type III pantothenate kinase (263 aa).

9–16 is a binding site for ATP; sequence DIGNTSIK. Substrate is bound by residues tyrosine 103 and 110–113; that span reads GADR. Aspartate 112 acts as the Proton acceptor in catalysis. Residue aspartate 134 coordinates K(+). An ATP-binding site is contributed by threonine 137. Threonine 190 contributes to the substrate binding site.

This sequence belongs to the type III pantothenate kinase family. As to quaternary structure, homodimer. NH4(+) serves as cofactor. K(+) is required as a cofactor.

It is found in the cytoplasm. The enzyme catalyses (R)-pantothenate + ATP = (R)-4'-phosphopantothenate + ADP + H(+). It functions in the pathway cofactor biosynthesis; coenzyme A biosynthesis; CoA from (R)-pantothenate: step 1/5. Its function is as follows. Catalyzes the phosphorylation of pantothenate (Pan), the first step in CoA biosynthesis. This Desulfovibrio desulfuricans (strain ATCC 27774 / DSM 6949 / MB) protein is Type III pantothenate kinase.